The sequence spans 427 residues: Glutamate-1-semialdehyde 2,1-aminomutase (427 aa).

Lysine 265 carries the post-translational modification N6-(pyridoxal phosphate)lysine.

It belongs to the class-III pyridoxal-phosphate-dependent aminotransferase family. HemL subfamily. In terms of assembly, homodimer. Requires pyridoxal 5'-phosphate as cofactor.

Its subcellular location is the cytoplasm. It catalyses the reaction (S)-4-amino-5-oxopentanoate = 5-aminolevulinate. It functions in the pathway porphyrin-containing compound metabolism; protoporphyrin-IX biosynthesis; 5-aminolevulinate from L-glutamyl-tRNA(Glu): step 2/2. The chain is Glutamate-1-semialdehyde 2,1-aminomutase from Bordetella petrii (strain ATCC BAA-461 / DSM 12804 / CCUG 43448).